Reading from the N-terminus, the 253-residue chain is Indole-3-glycerol phosphate synthase (253 aa).

It belongs to the TrpC family.

It carries out the reaction 1-(2-carboxyphenylamino)-1-deoxy-D-ribulose 5-phosphate + H(+) = (1S,2R)-1-C-(indol-3-yl)glycerol 3-phosphate + CO2 + H2O. The protein operates within amino-acid biosynthesis; L-tryptophan biosynthesis; L-tryptophan from chorismate: step 4/5. The sequence is that of Indole-3-glycerol phosphate synthase from Bacillus cereus (strain ZK / E33L).